The following is a 440-amino-acid chain: Oligodendrocyte-myelin glycoprotein (440 aa).

The N-terminal stretch at M1 to C24 is a signal peptide. The LRRNT domain maps to I25–E55. Residues N45 and N61 are each glycosylated (N-linked (GlcNAc...) asparagine). LRR repeat units lie at residues N56–Y77, N79–S100, L101–Y121, N124–L145, S147–K168, L169–N189, N192–Q213, and Q216–L239. Residue N103 is glycosylated (N-linked (GlcNAc...) asparagine). 5 N-linked (GlcNAc...) asparagine glycosylation sites follow: N152, N176, N189, N192, and N234. 5 Ser/Thr-rich repeats span residues C229–P270, S271–L292, S293–P335, E336–P377, and M378–P416. Residues N364 and N389 are each glycosylated (N-linked (GlcNAc...) asparagine). S417 is lipidated: GPI-anchor amidated serine. Residues V418–V440 constitute a propeptide, removed in mature form. A glycan (N-linked (GlcNAc...) asparagine) is linked at N425.

Binds to RTN4R. Post-translationally, O-glycosylated in its Ser/Thr-rich repeat domain. Oligodendrocytes and myelin of the central nervous system.

The protein resides in the cell membrane. In terms of biological role, cell adhesion molecule contributing to the interactive process required for myelination in the central nervous system. This Homo sapiens (Human) protein is Oligodendrocyte-myelin glycoprotein (OMG).